The sequence spans 325 residues: Ribose-phosphate pyrophosphokinase (325 aa).

ATP is bound by residues 45 to 47 (NGE) and 104 to 105 (RQ). Positions 138 and 178 each coordinate Mg(2+). The active site involves lysine 202. Residues arginine 204, aspartate 230, and 234-238 (DTGGT) each bind D-ribose 5-phosphate.

This sequence belongs to the ribose-phosphate pyrophosphokinase family. Class I subfamily. In terms of assembly, homohexamer. Mg(2+) is required as a cofactor.

It is found in the cytoplasm. The catalysed reaction is D-ribose 5-phosphate + ATP = 5-phospho-alpha-D-ribose 1-diphosphate + AMP + H(+). Its pathway is metabolic intermediate biosynthesis; 5-phospho-alpha-D-ribose 1-diphosphate biosynthesis; 5-phospho-alpha-D-ribose 1-diphosphate from D-ribose 5-phosphate (route I): step 1/1. Its function is as follows. Involved in the biosynthesis of the central metabolite phospho-alpha-D-ribosyl-1-pyrophosphate (PRPP) via the transfer of pyrophosphoryl group from ATP to 1-hydroxyl of ribose-5-phosphate (Rib-5-P). In Corynebacterium glutamicum (strain ATCC 13032 / DSM 20300 / JCM 1318 / BCRC 11384 / CCUG 27702 / LMG 3730 / NBRC 12168 / NCIMB 10025 / NRRL B-2784 / 534), this protein is Ribose-phosphate pyrophosphokinase.